Here is a 230-residue protein sequence, read N- to C-terminus: Ureidoacrylate amidohydrolase RutB (230 aa).

Asp24 serves as the catalytic Proton acceptor. Lys133 is an active-site residue. The active-site Nucleophile is the Cys166.

This sequence belongs to the isochorismatase family. RutB subfamily.

The catalysed reaction is (Z)-3-ureidoacrylate + H2O + H(+) = (Z)-3-aminoacrylate + NH4(+) + CO2. It catalyses the reaction (Z)-3-ureidoacrylate + H2O = (Z)-3-aminoacrylate + carbamate + H(+). It carries out the reaction (Z)-2-methylureidoacrylate + H2O + H(+) = (Z)-2-methylaminoacrylate + NH4(+) + CO2. Hydrolyzes ureidoacrylate to form aminoacrylate and carbamate. The carbamate hydrolyzes spontaneously, thereby releasing one of the nitrogen atoms of the pyrimidine ring as ammonia and one of its carbon atoms as CO2. The chain is Ureidoacrylate amidohydrolase RutB from Escherichia coli O157:H7.